A 79-amino-acid chain; its full sequence is MSYERLLCLVLVASFIAASVAQHPGDAPRMEDDSSAIQRRGLPCGCRGKSGIYWFSGKCPGGYGYTTYCSYVIGLCCVK.

The first 21 residues, 1 to 21, serve as a signal peptide directing secretion; it reads MSYERLLCLVLVASFIAASVA. Residues 22 to 38 constitute a propeptide that is removed on maturation; the sequence is QHPGDAPRMEDDSSAIQ. 3 disulfide bridges follow: C44–C76, C46–C69, and C59–C77.

The protein belongs to the sea anemone type 3 (BDS) potassium channel toxin family.

It localises to the secreted. The protein resides in the nematocyst. Potently and selectively inhibits voltage-gated potassium channels Kv11/KCNH/ERG. Acts as a gating-modifier toxin that shifts the voltage-dependence of ERG activation in the positive direction and suppresses its current amplitudes elicited by strong depolarizing pulses that maximally activate the channels. This Bunodosoma granuliferum (Red warty sea anemone) protein is U-actitoxin-Bgr3d.